The following is a 315-amino-acid chain: MALYHLFSHPIERAYRAGLCSKAALFLLLATALTYIPPLLVAFRSHGFWLKRSNYEEQPNVRFQHQVLLVALLGPEPGAFLAWSTYPTFNRLQGVHLRVPLVSTREEDRNQDGKMDVLYFKLELPLQSTEQVLGVQLILTFSYQLHRMSTFEMQSMAFLQSSFAVPGSQLHVNGDLRLQQKQPLSYRGLDVRYNVSVINGTSPFAHDYDLTHIVAAYQERNVTTVLSDPNPIWLVGRAAEAPFVIDAVIRYPVEVISYQPGFWEMIKFAWIQYVSILLIFLWVFERIKIFVFQNQVVTSIPVAVPQGEIRKEHLS.

A helical transmembrane segment spans residues 23–43 (AALFLLLATALTYIPPLLVAF). Residues Asn194, Asn199, and Asn221 are each glycosylated (N-linked (GlcNAc...) asparagine). The helical transmembrane segment at 262 to 282 (FWEMIKFAWIQYVSILLIFLW) threads the bilayer.

The protein belongs to the TMEM231 family. As to quaternary structure, part of the tectonic-like complex (also named B9 complex). Interacts with TMEM107.

It localises to the cell projection. The protein localises to the cilium membrane. Transmembrane component of the tectonic-like complex, a complex localized at the transition zone of primary cilia and acting as a barrier that prevents diffusion of transmembrane proteins between the cilia and plasma membranes. Required for ciliogenesis and sonic hedgehog/SHH signaling. In Rattus norvegicus (Rat), this protein is Transmembrane protein 231 (Tmem231).